The following is a 450-amino-acid chain: Putative mediator of RNA polymerase II transcription subunit 27 (450 aa).

A coiled-coil region spans residues 15–118 (QQQQAQQHQQ…QKLKKSMDLV (104 aa)).

Belongs to the Mediator complex subunit 27 family. As to quaternary structure, component of the Mediator complex.

It localises to the nucleus. Component of the Mediator complex, a coactivator involved in the regulated transcription of nearly all RNA polymerase II-dependent genes. Mediator functions as a bridge to convey information from gene-specific regulatory proteins to the basal RNA polymerase II transcription machinery. Mediator is recruited to promoters by direct interactions with regulatory proteins and serves as a scaffold for the assembly of a functional preinitiation complex with RNA polymerase II and the general transcription factors. In Dictyostelium discoideum (Social amoeba), this protein is Putative mediator of RNA polymerase II transcription subunit 27 (med27).